The following is a 250-amino-acid chain: MALHLGIITLLPEIIQGIHYGVTGRAIEQGLVKIDCWNPRDWSSRPYKQVDDKPYGGGPGMVIMYEPLHAAIKHARSEMKENCKTIYLSPQGKVVRQNDLKQIAAQKQSLLFVAGRYEGIDERIISHHVDEEWSLGDFVLSGGELAAMVFIDAIIRLIPGSLGHLGSAVQDSFMNGLLDCPHYTRPATINGLDVPDVLLGGNHKEIERWRRKQSLGKTWLKRPDLLEKVQLSETDKQLLAEFKCEHGDSC.

S-adenosyl-L-methionine-binding positions include Gly115 and 135–140 (LGDFVL).

Belongs to the RNA methyltransferase TrmD family. As to quaternary structure, homodimer.

The protein localises to the cytoplasm. The enzyme catalyses guanosine(37) in tRNA + S-adenosyl-L-methionine = N(1)-methylguanosine(37) in tRNA + S-adenosyl-L-homocysteine + H(+). Functionally, specifically methylates guanosine-37 in various tRNAs. In Legionella pneumophila (strain Lens), this protein is tRNA (guanine-N(1)-)-methyltransferase.